Here is a 564-residue protein sequence, read N- to C-terminus: MRLSEFHLHTTKEIPADAELVSHRLMLRAGMIRKLASGLYTWSPLGLRVLRKVEAIVRDEMNRAGAVEMLLPTIQPRELWEESERWEKFGSQLLKIKDRKQAEYCYSPTAEEAVTDYVRQELTSYKQLPVNLYQIQTKFRDEIRPRFGVMRAREFVMKDAYSFHLSDADLVREYENMRATYTRIFTRLGLEFRSVQADSGAIGGDASQEFHVIADSGEDVLAFSTGSDYAANIEAAIAATPGPRLTAKETLQKVSTPTQKRCEDVTALLDIPLQRMVKSIAVMTDSGFFLALLRGDHTLNDIKLSRLPGLANFRLANEVEIARHLGSEPGFLGPVCPGMSIRIIADCEVAVMADFVVGANEVGFHLVGVNWGRDLPEPEVVADIRNVIEGDRAVDGGKICIARGIEVGHVFQLGRKYAEAMKATVLDEYGKAVTMTMGCYGIGVSRIVAAAIEQNHDVAGIIWPAPIAPWQVAVCVINPKKDPVIIAAAELLLAELQSADVDTVLDDRGLRPGVMFADMELIGIPHRIVVSERGLAAGTYEYRARRTAMVENLDKTTLLTRIKA.

It belongs to the class-II aminoacyl-tRNA synthetase family. ProS type 1 subfamily. In terms of assembly, homodimer.

It is found in the cytoplasm. The enzyme catalyses tRNA(Pro) + L-proline + ATP = L-prolyl-tRNA(Pro) + AMP + diphosphate. Functionally, catalyzes the attachment of proline to tRNA(Pro) in a two-step reaction: proline is first activated by ATP to form Pro-AMP and then transferred to the acceptor end of tRNA(Pro). As ProRS can inadvertently accommodate and process non-cognate amino acids such as alanine and cysteine, to avoid such errors it has two additional distinct editing activities against alanine. One activity is designated as 'pretransfer' editing and involves the tRNA(Pro)-independent hydrolysis of activated Ala-AMP. The other activity is designated 'posttransfer' editing and involves deacylation of mischarged Ala-tRNA(Pro). The misacylated Cys-tRNA(Pro) is not edited by ProRS. This chain is Proline--tRNA ligase, found in Xylella fastidiosa (strain M12).